Reading from the N-terminus, the 148-residue chain is Multiprotein-bridging factor 1c (148 aa).

One can recognise an HTH cro/C1-type domain in the interval 91–145; the sequence is IQKARLEKKMSQADLAKQINERTQVVQEYENGKAVPNQAVLAKMEKVLGVKLRGK. Residues 102-121 constitute a DNA-binding region (H-T-H motif); that stretch reads QADLAKQINERTQVVQEYEN.

It belongs to the MBF1 family. Binds to TPS5. As to expression, expressed in leaves, roots, stems, flowers, siliques and shoots. Not detected in seeds.

The protein localises to the nucleus. The protein resides in the nucleolus. Its subcellular location is the cytoplasm. Transcriptional coactivator that stimulates transcriptional activity by bridging regulatory proteins and TBP, thereby recruiting TBP to promoters occupied by DNA-binding regulators. Involved in the tolerance to heat and osmotic stress by partially activating the ethylene-response signal transduction pathway. This Arabidopsis thaliana (Mouse-ear cress) protein is Multiprotein-bridging factor 1c (MBF1C).